The following is a 338-amino-acid chain: DNA-directed RNA polymerase subunit alpha (338 aa).

The tract at residues 1 to 234 (MIQKNWQELI…DQLQLFINFE (234 aa)) is alpha N-terminal domain (alpha-NTD). Positions 250–338 (FNKNLLRKVD…ELAKKLEEPY (89 aa)) are alpha C-terminal domain (alpha-CTD).

The protein belongs to the RNA polymerase alpha chain family. In terms of assembly, homodimer. The RNAP catalytic core consists of 2 alpha, 1 beta, 1 beta' and 1 omega subunit. When a sigma factor is associated with the core the holoenzyme is formed, which can initiate transcription.

The enzyme catalyses RNA(n) + a ribonucleoside 5'-triphosphate = RNA(n+1) + diphosphate. DNA-dependent RNA polymerase catalyzes the transcription of DNA into RNA using the four ribonucleoside triphosphates as substrates. This chain is DNA-directed RNA polymerase subunit alpha, found in Paramagnetospirillum magneticum (strain ATCC 700264 / AMB-1) (Magnetospirillum magneticum).